We begin with the raw amino-acid sequence, 655 residues long: tRNA uridine 5-carboxymethylaminomethyl modification enzyme MnmG (655 aa).

13–18 (GGGHAG) is a binding site for FAD. 281–295 (GPRYCPSVEDKINRF) lines the NAD(+) pocket.

The protein belongs to the MnmG family. In terms of assembly, homodimer. Heterotetramer of two MnmE and two MnmG subunits. FAD serves as cofactor.

The protein localises to the cytoplasm. NAD-binding protein involved in the addition of a carboxymethylaminomethyl (cmnm) group at the wobble position (U34) of certain tRNAs, forming tRNA-cmnm(5)s(2)U34. The chain is tRNA uridine 5-carboxymethylaminomethyl modification enzyme MnmG from Paracidovorax citrulli (strain AAC00-1) (Acidovorax citrulli).